We begin with the raw amino-acid sequence, 236 residues long: Carbonyl reductase family member 4 (236 aa).

NADP(+)-binding positions include 11–14, 34–35, Asp-55, and 82–84; these read SRGI, RN, and SAG. Substrate is bound at residue Ser-134. Residues Tyr-147, Lys-151, and 180-182 each bind NADP(+); that span reads IRT. Tyr-147 functions as the Proton acceptor in the catalytic mechanism.

It belongs to the short-chain dehydrogenases/reductases (SDR) family. Homotetramer (in vitro). Heterotetramer with HSD17B8; contains two molecules each of HSD17B8 and CBR4.

The protein resides in the mitochondrion matrix. It participates in lipid metabolism; fatty acid biosynthesis. In terms of biological role, the heterotetramer with HSD17B8 has NADH-dependent 3-ketoacyl-acyl carrier protein reductase activity, and thereby plays a role in mitochondrial fatty acid biosynthesis. Within the heterotetramer, HSD17B8 binds NADH; CBR4 binds NADPD. The homotetramer has NADPH-dependent quinone reductase activity. Both homotetramer and the heterotetramer have broad in vitro substrate specificity and can reduce 9,10-phenanthrenequinone, 1,4-benzoquinone and various other o-quinones and p-quinones. In Xenopus laevis (African clawed frog), this protein is Carbonyl reductase family member 4 (cbr4).